Here is a 294-residue protein sequence, read N- to C-terminus: 3-methyl-2-oxobutanoate hydroxymethyltransferase (294 aa).

Over residues 1 to 12 (MSASAESTNATP) the composition is skewed to polar residues. The tract at residues 1 to 21 (MSASAESTNATPYGTLPPTAA) is disordered. Residues Asp69 and Asp112 each contribute to the Mg(2+) site. 3-methyl-2-oxobutanoate-binding positions include 69 to 70 (DS), Asp112, and Lys141. Residue Glu143 participates in Mg(2+) binding. The active-site Proton acceptor is the Glu210.

Belongs to the PanB family. As to quaternary structure, homodecamer; pentamer of dimers. Requires Mg(2+) as cofactor.

The protein resides in the cytoplasm. It carries out the reaction 3-methyl-2-oxobutanoate + (6R)-5,10-methylene-5,6,7,8-tetrahydrofolate + H2O = 2-dehydropantoate + (6S)-5,6,7,8-tetrahydrofolate. Its pathway is cofactor biosynthesis; (R)-pantothenate biosynthesis; (R)-pantoate from 3-methyl-2-oxobutanoate: step 1/2. In terms of biological role, catalyzes the reversible reaction in which hydroxymethyl group from 5,10-methylenetetrahydrofolate is transferred onto alpha-ketoisovalerate to form ketopantoate. This chain is 3-methyl-2-oxobutanoate hydroxymethyltransferase, found in Albidiferax ferrireducens (strain ATCC BAA-621 / DSM 15236 / T118) (Rhodoferax ferrireducens).